The primary structure comprises 149 residues: 3-dehydroquinate dehydratase (149 aa).

The Proton acceptor role is filled by Tyr-22. Residues Asn-74, His-80, and Asp-87 each coordinate substrate. His-100 serves as the catalytic Proton donor. Substrate contacts are provided by residues 101 to 102 and Arg-111; that span reads LS.

The protein belongs to the type-II 3-dehydroquinase family. In terms of assembly, homododecamer.

The catalysed reaction is 3-dehydroquinate = 3-dehydroshikimate + H2O. It functions in the pathway metabolic intermediate biosynthesis; chorismate biosynthesis; chorismate from D-erythrose 4-phosphate and phosphoenolpyruvate: step 3/7. In terms of biological role, catalyzes a trans-dehydration via an enolate intermediate. The sequence is that of 3-dehydroquinate dehydratase from Vesicomyosocius okutanii subsp. Calyptogena okutanii (strain HA).